The following is a 212-amino-acid chain: Thymidylate kinase (212 aa).

Residue 13–20 (GLEGAGKS) participates in ATP binding.

Belongs to the thymidylate kinase family.

It catalyses the reaction dTMP + ATP = dTDP + ADP. Functionally, phosphorylation of dTMP to form dTDP in both de novo and salvage pathways of dTTP synthesis. The sequence is that of Thymidylate kinase from Legionella pneumophila (strain Corby).